The chain runs to 177 residues: MSRVAKAPVALPNGVSVTLNGQQVEVKGSKGTMSLHLHDLVELKQEDSQLILSPVSDSKEAWMHTGTMRSTLNNFVIGVSEGFERKLQLIGVGYRAQVAGNKITLNVGYSHPVEYILPEGVTAETPSQTEIILKSNDKQALGQAAAKIRGYRPPEPYKGKGIRYSDEHVVRKEAKKK.

Positions 151 to 177 (YRPPEPYKGKGIRYSDEHVVRKEAKKK) are disordered. Residues 155–177 (EPYKGKGIRYSDEHVVRKEAKKK) are compositionally biased toward basic and acidic residues.

It belongs to the universal ribosomal protein uL6 family. As to quaternary structure, part of the 50S ribosomal subunit.

Functionally, this protein binds to the 23S rRNA, and is important in its secondary structure. It is located near the subunit interface in the base of the L7/L12 stalk, and near the tRNA binding site of the peptidyltransferase center. In Psychrobacter sp. (strain PRwf-1), this protein is Large ribosomal subunit protein uL6.